A 323-amino-acid polypeptide reads, in one-letter code: Nucleotide-binding protein ZMO1325 (323 aa).

25 to 32 (GLSGAGKS) lines the ATP pocket. 78–81 (DSRT) serves as a coordination point for GTP.

The protein belongs to the RapZ-like family.

In terms of biological role, displays ATPase and GTPase activities. This Zymomonas mobilis subsp. mobilis (strain ATCC 31821 / ZM4 / CP4) protein is Nucleotide-binding protein ZMO1325.